We begin with the raw amino-acid sequence, 162 residues long: Peptidyl-prolyl cis-trans isomerase (162 aa).

Serine 2 carries the post-translational modification N-acetylserine. The 157-residue stretch at 5–161 (YFDVEADGQP…ARIVVAKSGE (157 aa)) folds into the PPIase cyclophilin-type domain. Residues lysine 29 and lysine 42 each participate in a glycyl lysine isopeptide (Lys-Gly) (interchain with G-Cter in ubiquitin) cross-link. Threonine 71 bears the Phosphothreonine mark. Residues lysine 123 and lysine 139 each participate in a glycyl lysine isopeptide (Lys-Gly) (interchain with G-Cter in ubiquitin) cross-link. Phosphoserine occurs at positions 142 and 145. Residues lysine 151 and lysine 158 each participate in a glycyl lysine isopeptide (Lys-Gly) (interchain with G-Cter in ubiquitin) cross-link.

It belongs to the cyclophilin-type PPIase family. PPIase A subfamily. In terms of assembly, interacts with a complex composed of SIN3 and RPD3. Identified in the Set3C complex with HOS2, HST1, SNT1, SIF2, HOS4/YIL112W and SET3.

The protein resides in the cytoplasm. It is found in the nucleus. The protein localises to the mitochondrion intermembrane space. The enzyme catalyses [protein]-peptidylproline (omega=180) = [protein]-peptidylproline (omega=0). With respect to regulation, binds cyclosporin A (CsA). CsA mediates some of its effects via an inhibitory action on PPIase. Its function is as follows. PPIases accelerate the folding of proteins. It catalyzes the cis-trans isomerization of proline imidic peptide bonds in oligopeptides. Involved in histone deacetylase complexes, suggesting a function in chromatin. Imports fructose-1,6-bisphosphatase (FBPase) into the intermediate vacuole import and degradation (Vid) vesicles. Regulates the meiotic gene program via the Set3C histone deacetylase complex to promote efficient sporulation, and the prolyl-isomerase activity is required for this function. The chain is Peptidyl-prolyl cis-trans isomerase (CPR1) from Saccharomyces cerevisiae (strain ATCC 204508 / S288c) (Baker's yeast).